The chain runs to 580 residues: Laccase-20 (580 aa).

The N-terminal stretch at 1 to 23 (MVASLLCTVAVAVLAVAAVGGEA) is a signal peptide. 2 Plastocyanin-like domains span residues 31–147 (VVHE…PRDG) and 156–310 (KDVP…YTSA). N-linked (GlcNAc...) asparagine glycans are attached at residues Asn36 and Asn42. 2 residues coordinate Cu cation: His81 and His83. N-linked (GlcNAc...) asparagine glycosylation is present at Asn115. Cu cation is bound by residues His126 and His128. N-linked (GlcNAc...) asparagine glycosylation is found at Asn200, Asn339, Asn392, Asn429, and Asn460. The Plastocyanin-like 3 domain occupies 419-561 (DFPVRPPRPY…ATAFIVEDGP (143 aa)). Asn478, His481, His483, His540, Cys541, His542, His546, and Met551 together coordinate Cu cation. The tract at residues 560 to 580 (GPTPETSLPPPPPEFKRCDAS) is disordered.

This sequence belongs to the multicopper oxidase family. Cu cation is required as a cofactor.

The protein localises to the secreted. The protein resides in the extracellular space. It localises to the apoplast. It carries out the reaction 4 hydroquinone + O2 = 4 benzosemiquinone + 2 H2O. Its function is as follows. Lignin degradation and detoxification of lignin-derived products. The sequence is that of Laccase-20 (LAC20) from Oryza sativa subsp. indica (Rice).